The following is a 212-amino-acid chain: Pyridoxine/pyridoxamine 5'-phosphate oxidase (212 aa).

Residues R8–Y11 and K66 each bind substrate. FMN is bound by residues R61 to K66, F76 to T77, R82, K83, and Q105. Substrate contacts are provided by Y123, R127, and S131. FMN-binding positions include Q140–S141 and W184. R190 to H192 provides a ligand contact to substrate. R194 serves as a coordination point for FMN.

The protein belongs to the pyridoxamine 5'-phosphate oxidase family. As to quaternary structure, homodimer. FMN serves as cofactor.

The enzyme catalyses pyridoxamine 5'-phosphate + O2 + H2O = pyridoxal 5'-phosphate + H2O2 + NH4(+). It catalyses the reaction pyridoxine 5'-phosphate + O2 = pyridoxal 5'-phosphate + H2O2. Its pathway is cofactor metabolism; pyridoxal 5'-phosphate salvage; pyridoxal 5'-phosphate from pyridoxamine 5'-phosphate: step 1/1. The protein operates within cofactor metabolism; pyridoxal 5'-phosphate salvage; pyridoxal 5'-phosphate from pyridoxine 5'-phosphate: step 1/1. Catalyzes the oxidation of either pyridoxine 5'-phosphate (PNP) or pyridoxamine 5'-phosphate (PMP) into pyridoxal 5'-phosphate (PLP). The sequence is that of Pyridoxine/pyridoxamine 5'-phosphate oxidase from Paraburkholderia phymatum (strain DSM 17167 / CIP 108236 / LMG 21445 / STM815) (Burkholderia phymatum).